Here is a 696-residue protein sequence, read N- to C-terminus: Transcriptional regulatory protein pro1 (696 aa).

Residues 1-48 form a disordered region; that stretch reads MSTQSPNHHEDITKTSSVNMTTTTTTTKTKAAAKAGTNAAPKQKTQMH. Over residues 21 to 40 the composition is skewed to low complexity; the sequence is TTTTTTTKTKAAAKAGTNAA. The zn(2)-C6 fungal-type DNA-binding region spans 55–82; that stretch reads CYTCRLRRKKCDEGSPMCTACKHLGLCC. The tract at residues 112 to 145 is disordered; that stretch reads LSEKSSHTIQTSINTPPGLSHSLPTSATFSDPLD. Positions 118–140 are enriched in polar residues; it reads HTIQTSINTPPGLSHSLPTSATF.

The protein localises to the nucleus. In terms of biological role, may be involved in fruiting body development. In Neurospora crassa (strain ATCC 24698 / 74-OR23-1A / CBS 708.71 / DSM 1257 / FGSC 987), this protein is Transcriptional regulatory protein pro1 (adv-1).